A 258-amino-acid chain; its full sequence is MLLVIDVGNTNTVIGVYHDGELEYHWRIETSRHKTEDEFGMLLRSLFEHSGLMFEQIEGIIISSVVPPIMFSLERMCTKYFHIEPQVVGPGMKTGLNIKYDNPKEVGADRIVNAVAAIQQYGAPLIVVDFGTATTYCYIDENKQYMGGAIAPGITISTEALYSRAAKLPRIEIARPDNIIGKNTVSAMQSGILFGYVGQVEGIVKRMKWQATQEPKVIATGGLASLIANESDCIDIVDPFLTLKGLEIIYERNRVGHV.

6–13 (DVGNTNTV) lines the ATP pocket. Substrate contacts are provided by residues Tyr100 and 107 to 110 (GADR). Asp109 serves as the catalytic Proton acceptor. Position 129 (Asp129) interacts with K(+). Thr132 contributes to the ATP binding site. Thr184 provides a ligand contact to substrate.

This sequence belongs to the type III pantothenate kinase family. As to quaternary structure, homodimer. It depends on NH4(+) as a cofactor. Requires K(+) as cofactor.

It localises to the cytoplasm. The enzyme catalyses (R)-pantothenate + ATP = (R)-4'-phosphopantothenate + ADP + H(+). Its pathway is cofactor biosynthesis; coenzyme A biosynthesis; CoA from (R)-pantothenate: step 1/5. Functionally, catalyzes the phosphorylation of pantothenate (Pan), the first step in CoA biosynthesis. The protein is Type III pantothenate kinase of Bacillus velezensis (strain DSM 23117 / BGSC 10A6 / LMG 26770 / FZB42) (Bacillus amyloliquefaciens subsp. plantarum).